A 251-amino-acid chain; its full sequence is Hydroxypyruvate/pyruvate aldolase (251 aa).

Residue H44 is the Proton acceptor of the active site. Residue R69 coordinates 3-hydroxypyruvate. E145 is a binding site for Mg(2+). Positions 170 and 171 each coordinate 3-hydroxypyruvate. D171 lines the Mg(2+) pocket.

This sequence belongs to the HpcH/HpaI aldolase family. Homohexamer. Trimer of homodimers. Mn(2+) serves as cofactor. It depends on Mg(2+) as a cofactor. The cofactor is Co(2+). Zn(2+) is required as a cofactor.

It carries out the reaction D-glyceraldehyde + 3-hydroxypyruvate = 2-dehydro-D-galactonate. It catalyses the reaction D-glyceraldehyde + pyruvate = 2-dehydro-3-deoxy-L-galactonate. The enzyme catalyses L-glyceraldehyde + 3-hydroxypyruvate = (3S,4S,5S)-3,4,5,6-tetrahydroxy-2-oxohexanoate. The catalysed reaction is (R)-lactaldehyde + 3-hydroxypyruvate = (3S,4S,5R)-3,4,5-trihydroxy-2-oxohexanoate. It carries out the reaction (R)-lactaldehyde + 3-hydroxypyruvate = (3S,4R,5R)-3,4,5-trihydroxy-2-oxohexanoate. It catalyses the reaction (S)-lactaldehyde + 3-hydroxypyruvate = (3S,4S,5S)-3,4,5-trihydroxy-2-oxohexanoate. The enzyme catalyses D-erythrose + 3-hydroxypyruvate = (3S,4S,5R,6R)-3,4,5,6,7-pentahydroxy-2-oxoheptanoate. Its activity is regulated as follows. Binding of substrate induces a dynamic movement of the metal cofactor between an inactive coordination sphere to a catalytically active one. When oxaloacetate is used as substrate, activity is increased in the presence of micromolar concentrations of inorganic phosphate. The phosphate does not improve the binding of the substrate, but exclusively increases its rate of decarboxylation. Excessive phosphate concentrations negatively affect the reaction rate by removing the metal cofactor. Aldolase which can catalyze in vitro the aldolisation reaction between hydroxypyruvate (HPA) or pyruvate (PA) and D-glyceraldehyde (D-GA). The condensation of hydroxypyruvate and D-glyceraldehyde produces 2-dehydro-D-galactonate as the major product. The condensation of pyruvate and D-glyceraldehyde produces 2-dehydro-3-deoxy-L-galactonate. Can use other electrophilic substrates such as L-glyceraldehyde, D- and L-lactaldehyde and D-erythrose. Also catalyzes the retro-aldol type decarboxylation of oxaloacetate, a general property of known pyruvate aldolases. The protein is Hydroxypyruvate/pyruvate aldolase of Rhizorhabdus wittichii (strain DSM 6014 / CCUG 31198 / JCM 15750 / NBRC 105917 / EY 4224 / RW1) (Sphingomonas wittichii).